The following is a 164-amino-acid chain: Transcriptional repressor NrdR (164 aa).

The segment at 3–34 is a zinc-finger region; the sequence is CPFCRHDDTQVVDSRVSEDGAAIRRRRRCPAC. The ATP-cone domain maps to 49–139; the sequence is PSVVKKDGSR…VYRRFEDVSE (91 aa).

Belongs to the NrdR family. Zn(2+) serves as cofactor.

In terms of biological role, negatively regulates transcription of bacterial ribonucleotide reductase nrd genes and operons by binding to NrdR-boxes. The polypeptide is Transcriptional repressor NrdR (Paraburkholderia phymatum (strain DSM 17167 / CIP 108236 / LMG 21445 / STM815) (Burkholderia phymatum)).